A 123-amino-acid polypeptide reads, in one-letter code: MDQKKDPSNNLTERRVSKVQRPNKKKVRNQVESLSRNLERNKEGQLLQTVSKGHLEADSGHSLGREKENGELGIRSIFYDKDWNPRGTAPSHYRNIPYNPATFKRRTEVQARLGNLENIKIPK.

Positions 1–16 (MDQKKDPSNNLTERRV) are enriched in basic and acidic residues. Positions 1-42 (MDQKKDPSNNLTERRVSKVQRPNKKKVRNQVESLSRNLERNK) are disordered. Basic residues predominate over residues 17-28 (SKVQRPNKKKVR).

It belongs to the AIM4 family. In terms of assembly, may interact with the nuclear pore complex.

It localises to the cytoplasm. The protein is Altered inheritance of mitochondria protein 4 (AIM4) of Saccharomyces cerevisiae (strain ATCC 204508 / S288c) (Baker's yeast).